Here is a 259-residue protein sequence, read N- to C-terminus: UPF0246 protein PFLU_0992 (259 aa).

This sequence belongs to the UPF0246 family.

The sequence is that of UPF0246 protein PFLU_0992 from Pseudomonas fluorescens (strain SBW25).